The chain runs to 201 residues: Ras-related protein Rab-1B (201 aa).

The residue at position 1 (M1) is an N-acetylmethionine. Positions 17, 18, 19, 20, 21, 22, 23, 33, 34, 35, 36, 39, and 40 each coordinate GTP. S22 serves as a coordination point for Mg(2+). A Switch 1 motif is present at residues 30–45 (DDTYTESYISTIGVDF). The Mg(2+) site is built by T40 and D63. The segment at 64–83 (TAGQERGRTITSSYYRGAHG) is switch 2 region; required for interaction with REP1/CHM. Residues 65-80 (AGQERGRTITSSYYRG) carry the Switch 2 motif. G66, N121, K122, D124, S151, A152, and K153 together coordinate GTP. The segment at 173 to 201 (MGPGAASGGERPNLKIDSTPVKQAGGGCC) is disordered. Residues C200 and C201 are each lipidated (S-geranylgeranyl cysteine). C201 bears the Cysteine methyl ester mark.

The protein belongs to the small GTPase superfamily. Rab family. In terms of assembly, interacts with MICAL1 and MICAL2. Interacts (in GTP-bound form) with MICALCL, MICAL1 and MILCAL3. Interacts with GDI1; the interaction requires the GDP-bound state. Interacts with CHM/REP1; the interaction requires the GDP-bound form and is necessary for prenylation by GGTase II. Interacts with RabGAP TBC1D20. Interacts (in GDP-bound form) with lipid phosphatase MTMR6 (via GRAM domain); the interaction regulates MTMR6 recruitment to the endoplasmic reticulum-Golgi intermediate compartment. Interacts (in GDP-bound form) with lipid phosphatase MTMR7. Mg(2+) is required as a cofactor. Post-translationally, prenylated; by GGTase II, only after interaction of the substrate with Rab escort protein 1 (REP1).

The protein localises to the cytoplasm. The protein resides in the membrane. Its subcellular location is the preautophagosomal structure membrane. It localises to the perinuclear region. The catalysed reaction is GTP + H2O = GDP + phosphate + H(+). Its activity is regulated as follows. Regulated by guanine nucleotide exchange factors (GEFs) which promote the exchange of bound GDP for free GTP. Regulated by GTPase activating proteins (GAPs) including TBC1D20 which increases the GTP hydrolysis activity. Inhibited by GDP dissociation inhibitors (GDIs). The small GTPases Rab are key regulators of intracellular membrane trafficking, from the formation of transport vesicles to their fusion with membranes. Rabs cycle between an inactive GDP-bound form and an active GTP-bound form that is able to recruit to membranes different set of downstream effectors directly responsible for vesicle formation, movement, tethering and fusion. Plays a role in the initial events of the autophagic vacuole development which take place at specialized regions of the endoplasmic reticulum. Regulates vesicular transport between the endoplasmic reticulum and successive Golgi compartments. Required to modulate the compacted morphology of the Golgi. Promotes the recruitment of lipid phosphatase MTMR6 to the endoplasmic reticulum-Golgi intermediate compartment. The chain is Ras-related protein Rab-1B (RAB1B) from Sus scrofa (Pig).